A 498-amino-acid chain; its full sequence is Glycerol kinase (498 aa).

Thr-12 serves as a coordination point for ADP. Residues Thr-12, Thr-13, and Ser-14 each coordinate ATP. Sn-glycerol 3-phosphate is bound at residue Thr-12. Residue Arg-16 coordinates ADP. Residues Arg-82, Tyr-134, and Asp-243 each coordinate sn-glycerol 3-phosphate. Residues Arg-82, Tyr-134, Asp-243, and Gln-244 each coordinate glycerol. Residues Thr-265 and Gly-308 each contribute to the ADP site. Thr-265, Gly-308, Gln-312, and Gly-411 together coordinate ATP. Gly-411 lines the ADP pocket.

This sequence belongs to the FGGY kinase family.

It carries out the reaction glycerol + ATP = sn-glycerol 3-phosphate + ADP + H(+). The protein operates within polyol metabolism; glycerol degradation via glycerol kinase pathway; sn-glycerol 3-phosphate from glycerol: step 1/1. With respect to regulation, inhibited by fructose 1,6-bisphosphate (FBP). Key enzyme in the regulation of glycerol uptake and metabolism. Catalyzes the phosphorylation of glycerol to yield sn-glycerol 3-phosphate. This is Glycerol kinase from Brucella suis (strain ATCC 23445 / NCTC 10510).